Reading from the N-terminus, the 481-residue chain is UDP-N-acetylmuramoyl-L-alanyl-D-glutamate--L-lysine ligase (481 aa).

A UDP-N-acetyl-alpha-D-muramoyl-L-alanyl-D-glutamate-binding site is contributed by Ser-42. Residue 118–124 (GTKGKTT) participates in ATP binding. Residues Gln-158, 160–161 (TT), Ser-187, and Arg-195 each bind UDP-N-acetyl-alpha-D-muramoyl-L-alanyl-D-glutamate. Lys-229 is modified (N6-carboxylysine). Residues 404–407 (DDPN) carry the L-lysine recognition motif motif.

The protein belongs to the MurCDEF family. MurE subfamily. Carboxylation is probably crucial for Mg(2+) binding and, consequently, for the gamma-phosphate positioning of ATP.

The protein resides in the cytoplasm. It catalyses the reaction UDP-N-acetyl-alpha-D-muramoyl-L-alanyl-D-glutamate + L-lysine + ATP = UDP-N-acetyl-alpha-D-muramoyl-L-alanyl-gamma-D-glutamyl-L-lysine + ADP + phosphate + H(+). It functions in the pathway cell wall biogenesis; peptidoglycan biosynthesis. In terms of biological role, catalyzes the addition of L-lysine to the nucleotide precursor UDP-N-acetylmuramoyl-L-alanyl-D-glutamate (UMAG) in the biosynthesis of bacterial cell-wall peptidoglycan. This Streptococcus pyogenes serotype M3 (strain SSI-1) protein is UDP-N-acetylmuramoyl-L-alanyl-D-glutamate--L-lysine ligase.